The following is a 271-amino-acid chain: DNA repair protein RecO (271 aa).

Belongs to the RecO family.

In terms of biological role, involved in DNA repair and RecF pathway recombination. The polypeptide is DNA repair protein RecO (Rhodococcus erythropolis (strain PR4 / NBRC 100887)).